Consider the following 819-residue polypeptide: Ferric-pyoverdine 358 receptor (819 aa).

The N-terminal stretch at methionine 1–alanine 47 is a signal peptide. Residues asparagine 115–serine 122 carry the TonB box motif. A TBDR plug domain is found at serine 166–lysine 276. The TBDR beta-barrel domain occupies glutamate 281–phenylalanine 819. Positions tyrosine 802–phenylalanine 819 match the TonB C-terminal box motif.

It belongs to the TonB-dependent receptor family.

It is found in the cell outer membrane. Specific receptor for the siderophore ferric pyoverdine (pseudobactin) 358. This is Ferric-pyoverdine 358 receptor (pupA) from Pseudomonas putida (Arthrobacter siderocapsulatus).